The primary structure comprises 328 residues: Probable cell division protein WhiA (328 aa).

Positions 275–308 (SLEELGQLHDPVLTKDAIAGRIRRLLAMADKRAE) form a DNA-binding region, H-T-H motif.

Belongs to the WhiA family.

Involved in cell division and chromosome segregation. The polypeptide is Probable cell division protein WhiA (Nocardioides sp. (strain ATCC BAA-499 / JS614)).